A 395-amino-acid polypeptide reads, in one-letter code: Phosphoglycerate kinase (395 aa).

Residues D22 to N24, R37, H60 to R63, R116, and R149 contribute to the substrate site. ATP-binding positions include K199, E322, and G352–T355.

The protein belongs to the phosphoglycerate kinase family. Monomer.

The protein resides in the cytoplasm. It catalyses the reaction (2R)-3-phosphoglycerate + ATP = (2R)-3-phospho-glyceroyl phosphate + ADP. It participates in carbohydrate degradation; glycolysis; pyruvate from D-glyceraldehyde 3-phosphate: step 2/5. In Novosphingobium aromaticivorans (strain ATCC 700278 / DSM 12444 / CCUG 56034 / CIP 105152 / NBRC 16084 / F199), this protein is Phosphoglycerate kinase.